Reading from the N-terminus, the 481-residue chain is Aspartyl/glutamyl-tRNA(Asn/Gln) amidotransferase subunit B (481 aa).

It belongs to the GatB/GatE family. GatB subfamily. In terms of assembly, heterotrimer of A, B and C subunits.

The enzyme catalyses L-glutamyl-tRNA(Gln) + L-glutamine + ATP + H2O = L-glutaminyl-tRNA(Gln) + L-glutamate + ADP + phosphate + H(+). It carries out the reaction L-aspartyl-tRNA(Asn) + L-glutamine + ATP + H2O = L-asparaginyl-tRNA(Asn) + L-glutamate + ADP + phosphate + 2 H(+). Its function is as follows. Allows the formation of correctly charged Asn-tRNA(Asn) or Gln-tRNA(Gln) through the transamidation of misacylated Asp-tRNA(Asn) or Glu-tRNA(Gln) in organisms which lack either or both of asparaginyl-tRNA or glutaminyl-tRNA synthetases. The reaction takes place in the presence of glutamine and ATP through an activated phospho-Asp-tRNA(Asn) or phospho-Glu-tRNA(Gln). The sequence is that of Aspartyl/glutamyl-tRNA(Asn/Gln) amidotransferase subunit B from Pseudomonas fluorescens (strain ATCC BAA-477 / NRRL B-23932 / Pf-5).